The primary structure comprises 209 residues: FMN-dependent NADH:quinone oxidoreductase 2 (209 aa).

FMN contacts are provided by residues Ser-9, 15–17 (SVS), and 97–100 (MWNF).

The protein belongs to the azoreductase type 1 family. Homodimer. Requires FMN as cofactor.

The catalysed reaction is 2 a quinone + NADH + H(+) = 2 a 1,4-benzosemiquinone + NAD(+). It catalyses the reaction N,N-dimethyl-1,4-phenylenediamine + anthranilate + 2 NAD(+) = 2-(4-dimethylaminophenyl)diazenylbenzoate + 2 NADH + 2 H(+). Functionally, quinone reductase that provides resistance to thiol-specific stress caused by electrophilic quinones. In terms of biological role, also exhibits azoreductase activity. Catalyzes the reductive cleavage of the azo bond in aromatic azo compounds to the corresponding amines. This is FMN-dependent NADH:quinone oxidoreductase 2 from Pseudomonas syringae pv. tomato (strain ATCC BAA-871 / DC3000).